The primary structure comprises 781 residues: Protein translocase subunit SecA 2 (781 aa).

ATP-binding positions include Gln-85, 103–107 (GEGKT), and Asp-491.

The protein belongs to the SecA family. Monomer and homodimer. Part of the essential Sec protein translocation apparatus which comprises SecA, SecYEG and auxiliary proteins SecDF. Other proteins may also be involved.

The protein resides in the cell membrane. It is found in the cytoplasm. The catalysed reaction is ATP + H2O + cellular proteinSide 1 = ADP + phosphate + cellular proteinSide 2.. In terms of biological role, part of the Sec protein translocase complex. Interacts with the SecYEG preprotein conducting channel. Has a central role in coupling the hydrolysis of ATP to the transfer of proteins into and across the cell membrane, serving as an ATP-driven molecular motor driving the stepwise translocation of polypeptide chains across the membrane. The sequence is that of Protein translocase subunit SecA 2 from Clostridioides difficile (strain 630) (Peptoclostridium difficile).